The chain runs to 493 residues: Glutamyl-tRNA(Gln) amidotransferase subunit A (493 aa).

Active-site charge relay system residues include Lys-79 and Ser-159. Ser-183 functions as the Acyl-ester intermediate in the catalytic mechanism.

It belongs to the amidase family. GatA subfamily. Heterotrimer of A, B and C subunits.

It catalyses the reaction L-glutamyl-tRNA(Gln) + L-glutamine + ATP + H2O = L-glutaminyl-tRNA(Gln) + L-glutamate + ADP + phosphate + H(+). In terms of biological role, allows the formation of correctly charged Gln-tRNA(Gln) through the transamidation of misacylated Glu-tRNA(Gln) in organisms which lack glutaminyl-tRNA synthetase. The reaction takes place in the presence of glutamine and ATP through an activated gamma-phospho-Glu-tRNA(Gln). This is Glutamyl-tRNA(Gln) amidotransferase subunit A from Allorhizobium ampelinum (strain ATCC BAA-846 / DSM 112012 / S4) (Agrobacterium vitis (strain S4)).